The primary structure comprises 493 residues: Growth-regulating factor 8 (493 aa).

Residues 149–184 (AFSEAQWHELERQRNIYKYMMASVPVPPELLTPFPK) form the QLQ domain. Residues 243-287 (DLEPWRCKRTDGKKWRCSRNVIPDQKYCERHTHKSRPRSRKHVES) enclose the WRC domain. 2 consecutive short sequence motifs (bipartite nuclear localization signal) follow at residues 248 to 258 (RCKRTDGKKWR) and 276 to 283 (KSRPRSRK). The segment at 270–302 (CERHTHKSRPRSRKHVESSHQSSHHNDIRTAKN) is disordered. Over residues 273–283 (HTHKSRPRSRK) the composition is skewed to basic residues.

It belongs to the GRF family. Predominantly expressed in shoot tips and flowers.

Its subcellular location is the nucleus. Functionally, transcription activator that plays a role in the regulation of cell expansion in leaf and cotyledons tissues. Component of a network formed by miR396, the GRFs and their interacting factors (GIFs) acting in the regulation of meristem function, at least partially through the control of cell proliferation. This chain is Growth-regulating factor 8 (GRF8), found in Arabidopsis thaliana (Mouse-ear cress).